We begin with the raw amino-acid sequence, 312 residues long: Malate dehydrogenase (312 aa).

Residues 12-17 and aspartate 36 contribute to the NAD(+) site; that span reads GAGFTG. Residues arginine 87 and arginine 93 each contribute to the substrate site. Residues asparagine 100 and 123-125 contribute to the NAD(+) site; that span reads LTN. Asparagine 125 contributes to the substrate binding site. The residue at position 149 (serine 149) is a Phosphoserine. Arginine 156 lines the substrate pocket. Histidine 180 acts as the Proton acceptor in catalysis.

The protein belongs to the LDH/MDH superfamily. MDH type 3 family.

It carries out the reaction (S)-malate + NAD(+) = oxaloacetate + NADH + H(+). Catalyzes the reversible oxidation of malate to oxaloacetate. This is Malate dehydrogenase from Geobacillus thermodenitrificans.